The following is a 165-amino-acid chain: Secreted acidic protein 2 (165 aa).

Acidic residues-rich tracts occupy residues 1–58 (WSXS…DDSG) and 80–102 (ESSD…DAYN). The interval 1 to 112 (WSXSGDDDDD…DDSQAGELNS (112 aa)) is disordered. The segment covering 103–112 (DDSQAGELNS) has biased composition (polar residues).

As to expression, component of the acid-insoluble and acid-soluble organic matrix of the aragonitic skeleton (at protein level).

It is found in the secreted. This is Secreted acidic protein 2 from Acropora millepora (Staghorn coral).